The chain runs to 397 residues: uncharacterized protein (397 aa).

Cysteine 8, cysteine 14, cysteine 17, and cysteine 95 together coordinate [4Fe-4S] cluster. The S-adenosyl-L-methionine site is built by glutamine 229, tyrosine 258, glutamate 279, and aspartate 325. Residue cysteine 352 is the Nucleophile of the active site.

Belongs to the class I-like SAM-binding methyltransferase superfamily. RNA M5U methyltransferase family.

This is an uncharacterized protein from Chlamydia muridarum (strain MoPn / Nigg).